We begin with the raw amino-acid sequence, 87 residues long: Small polypeptide DEVIL 11 (87 aa).

Residues 1 to 11 (MASSSSLTRSG) are compositionally biased toward polar residues. A disordered region spans residues 1–47 (MASSSSLTRSGSVHLDEKWKLSKKDGGASRITRSSSTSSSSFNGKKQ). A compositionally biased stretch (basic and acidic residues) spans 14–27 (HLDEKWKLSKKDGG). Low complexity predominate over residues 29–41 (SRITRSSSTSSSS). Residues 51 to 82 (AFTRKCARLVKEQRARFYIMRRCVIMLICWRD) form a required for DVL/RTFL small polypeptide activity region. Residues 64 to 80 (RARFYIMRRCVIMLICW) traverse the membrane as a helical segment. Asn83 is a glycosylation site (N-linked (GlcNAc...) asparagine).

This sequence belongs to the DVL/RTFL small polypeptides family.

The protein localises to the cell membrane. In terms of biological role, small polypeptide acting as a regulatory molecule which coordinates cellular responses required for differentiation, growth and development, probably by restricting polar cell proliferation in lateral organs and coordinating socket cell recruitment and differentiation at trichome sites. In Arabidopsis thaliana (Mouse-ear cress), this protein is Small polypeptide DEVIL 11.